The following is a 161-amino-acid chain: Efficient mitochondria targeting-associated protein 19 (161 aa).

The Cytoplasmic segment spans residues 1 to 10; sequence MKLGHREQQF. Positions 7–159 constitute an EXPERA domain; the sequence is EQQFYLWYFI…PTFLIPLRLC (153 aa). A helical transmembrane segment spans residues 11–31; the sequence is YLWYFIVHIPITIFIDSSVVI. Residues 32–61 lie on the Lumenal side of the membrane; sequence PAKWQLGIAQKVVSDHIAKQHDFLLSEKPE. Residues 62-82 traverse the membrane as a helical segment; it reads WLYWFVVLELVLQLPLFVYFV. At 83 to 101 the chain is on the cytoplasmic side; that stretch reads NKFWNSSELQVNTNSRLKK. Residues 102-122 form a helical membrane-spanning segment; it reads WLRIYGWNASLTTLICIVVIF. The Lumenal segment spans residues 123 to 141; sequence KRGYIPYDVLKTSLSMTQK. A helical membrane pass occupies residues 142–160; it reads CQLASVYLPTFLIPLRLCF. Position 161 (V161) is a topological domain, cytoplasmic.

It belongs to the TMEM97/sigma-2 receptor family.

Its subcellular location is the endoplasmic reticulum membrane. Part of an import route for newly synthesized mitochondrial proteins termed the ER-SURF pathway (ER surface-mediated protein targeting), which retrieves mitochondrial precursor proteins from the ER surface and reroutes them to mitochondria for efficient mitochondrial import. Acts as a quality control factor in the ER, promoting the proteolytic degradation of nonproductive and extramitochondrial precursor proteins in the ER membrane thus removing them from the ER surface. This Saccharomyces cerevisiae (strain ATCC 204508 / S288c) (Baker's yeast) protein is Efficient mitochondria targeting-associated protein 19.